Consider the following 359-residue polypeptide: MLENRVKTKQIFIGGVAIGGDAPISTQSMTFSKTADIESTKNQIDRLKLAGADLVRVAVSNEKDALALKELKKVSPLPLIADIHFHYKFALIAAQSVDAIRINPGNIGSKEKIKAVVDACKEKNIPIRIGVNAGSLEKQFDQKYGPTPKGMVESALYNAKLLEDLDFTNFKISLKASDVIRTIEAYRMLRPLVIYPFHLGVTEAGNLFSSSIKSAMALGGLLMEGIGDTMRVSITGELENEIKVARAILRHSGRLKEGINWISCPTCGRIEANLVDMAIKVEKRLSHIKTPLDISVMGCVVNALGEAKHADMAIAFGNRSGLIIKEGKVIHKLAEKDLFETFVIEVENLAKEREKSLKD.

[4Fe-4S] cluster contacts are provided by cysteine 264, cysteine 267, cysteine 299, and glutamate 306.

It belongs to the IspG family. [4Fe-4S] cluster serves as cofactor.

It catalyses the reaction (2E)-4-hydroxy-3-methylbut-2-enyl diphosphate + oxidized [flavodoxin] + H2O + 2 H(+) = 2-C-methyl-D-erythritol 2,4-cyclic diphosphate + reduced [flavodoxin]. It participates in isoprenoid biosynthesis; isopentenyl diphosphate biosynthesis via DXP pathway; isopentenyl diphosphate from 1-deoxy-D-xylulose 5-phosphate: step 5/6. Its function is as follows. Converts 2C-methyl-D-erythritol 2,4-cyclodiphosphate (ME-2,4cPP) into 1-hydroxy-2-methyl-2-(E)-butenyl 4-diphosphate. This Helicobacter pylori (strain ATCC 700392 / 26695) (Campylobacter pylori) protein is 4-hydroxy-3-methylbut-2-en-1-yl diphosphate synthase (flavodoxin).